A 78-amino-acid polypeptide reads, in one-letter code: MSDTADRVKKIVVEHLGVEADKVTEEASFIDDLGADSLDIVELVMAFEEEFGVEIPDDAAEKISTVSDAIKYIDENKG.

Residues 2 to 77 form the Carrier domain; that stretch reads SDTADRVKKI…DAIKYIDENK (76 aa). Ser-37 is subject to O-(pantetheine 4'-phosphoryl)serine.

It belongs to the acyl carrier protein (ACP) family. Post-translationally, 4'-phosphopantetheine is transferred from CoA to a specific serine of apo-ACP by AcpS. This modification is essential for activity because fatty acids are bound in thioester linkage to the sulfhydryl of the prosthetic group.

It localises to the cytoplasm. It functions in the pathway lipid metabolism; fatty acid biosynthesis. Carrier of the growing fatty acid chain in fatty acid biosynthesis. The chain is Acyl carrier protein from Novosphingobium aromaticivorans (strain ATCC 700278 / DSM 12444 / CCUG 56034 / CIP 105152 / NBRC 16084 / F199).